We begin with the raw amino-acid sequence, 61 residues long: Small ribosomal subunit protein uS14 (61 aa).

Residues Cys24, Cys27, Cys40, and Cys43 each contribute to the Zn(2+) site.

The protein belongs to the universal ribosomal protein uS14 family. Zinc-binding uS14 subfamily. Part of the 30S ribosomal subunit. Contacts proteins S3 and S10. Requires Zn(2+) as cofactor.

In terms of biological role, binds 16S rRNA, required for the assembly of 30S particles and may also be responsible for determining the conformation of the 16S rRNA at the A site. This chain is Small ribosomal subunit protein uS14, found in Mycoplasmoides gallisepticum (strain R(low / passage 15 / clone 2)) (Mycoplasma gallisepticum).